Here is a 404-residue protein sequence, read N- to C-terminus: Acetate kinase (404 aa).

Asparagine 9 contacts Mg(2+). Lysine 16 is a binding site for ATP. Residue arginine 100 participates in substrate binding. Catalysis depends on aspartate 157, which acts as the Proton donor/acceptor. Residues histidine 215–glycine 219, aspartate 290–arginine 292, and glycine 335–asparagine 339 contribute to the ATP site. Position 386 (glutamate 386) interacts with Mg(2+).

Belongs to the acetokinase family. In terms of assembly, homodimer. It depends on Mg(2+) as a cofactor. The cofactor is Mn(2+).

It is found in the cytoplasm. The catalysed reaction is acetate + ATP = acetyl phosphate + ADP. Its pathway is metabolic intermediate biosynthesis; acetyl-CoA biosynthesis; acetyl-CoA from acetate: step 1/2. Functionally, catalyzes the formation of acetyl phosphate from acetate and ATP. Can also catalyze the reverse reaction. This Methylocella silvestris (strain DSM 15510 / CIP 108128 / LMG 27833 / NCIMB 13906 / BL2) protein is Acetate kinase.